Reading from the N-terminus, the 914-residue chain is MINSLLTRLFGSRNERQLRQLNSIVAKINALETELQKLSDTALQAKTTEFKQSIQDGKSLDKLLPEAFAVCREASRRVLGMRHYDVQLIGGMVLHLGKIAEMRTGEGKTLVATLPVYLNALAGKGVHVVTVNDYLARRDAAHMGRLYNWLGLSVGVVYPGMPHSDKQAAYGADITYGTNNEFGFDYLRDNMALSKADRYQRGLHYAIVDEVDSILIDEARTPLIISGPADESQDLYIRVNRIIPHLTRQENEEAEGDYWVDEKGKQVHLSEVGMERAEELLHQAGILEEGDDSLYAAQNLSVVHHLNAALRAHALYQRDVDYIVRDGEVVIVDEFTGRTLAGRRWSDGLHQAIEAKEGVPVQRENQTLASITFQNLFRIYKKLSGMTGTADTEAYEFQSIYGLEVMVIPTNRPTVRKDYPDQVFLNRSSKFNAVLEDIKDCAQRGQPVLVGTTSIEISEMLSEHLRKARVKHEVLNAKQHEREATIVANAGLPGAVTIATNMAGRGTDIVLGGSLDTVLAELDPDATEEDRFRVKTAWNRRHEAVKAAGGLHIIGTERHESRRIDNQLRGRAGRQGDPGSSRFYLSLEDSLMRIFASEWVQKVMRLMGMKEGDVIEDRRVTRQIERAQRKVEAHNFDIRKNLLDYDDVNNEQRKVVYAQRDELLDAESIKENIDSIRHEVIDALVTRFVPEHSIDEQWDLPGLQATLQSEWGLHLPLIEMLKGREEVDAERIAFLVQDAVDKHCAEREASIGAETMRALEKHVMLTVLDQGWKEHLATMDYLRQGIHLRGYAQKQPKQEYKREAFELFSEMLEHVKREVIASLARVRIRSEEEMATLEEQERRQVDTLLRQSQFQHQEAGGYGAGDEAVSLQRQPAGQGAAIAQVIRDTPKVGRNDPCPCGSGKKYKHCHGLVT.

Residues Q87, 105 to 109 (GEGKT), and D508 each bind ATP. Residues C898, C900, C909, and H910 each contribute to the Zn(2+) site.

This sequence belongs to the SecA family. As to quaternary structure, monomer and homodimer. Part of the essential Sec protein translocation apparatus which comprises SecA, SecYEG and auxiliary proteins SecDF-YajC and YidC. The cofactor is Zn(2+).

It is found in the cell inner membrane. Its subcellular location is the cytoplasm. The enzyme catalyses ATP + H2O + cellular proteinSide 1 = ADP + phosphate + cellular proteinSide 2.. In terms of biological role, part of the Sec protein translocase complex. Interacts with the SecYEG preprotein conducting channel. Has a central role in coupling the hydrolysis of ATP to the transfer of proteins into and across the cell membrane, serving both as a receptor for the preprotein-SecB complex and as an ATP-driven molecular motor driving the stepwise translocation of polypeptide chains across the membrane. In Xylella fastidiosa (strain M12), this protein is Protein translocase subunit SecA.